The chain runs to 256 residues: Small ribosomal subunit protein eS1 (256 aa).

Residue alanine 2 is modified to N-acetylalanine; partial.

The protein belongs to the eukaryotic ribosomal protein eS1 family. Component of the small ribosomal subunit. Mature ribosomes consist of a small (40S) and a large (60S) subunit. The 40S subunit contains about 33 different proteins and 1 molecule of RNA (18S). The 60S subunit contains about 49 different proteins and 3 molecules of RNA (25S, 5.8S and 5S).

Its subcellular location is the cytoplasm. This Coprinopsis cinerea (strain Okayama-7 / 130 / ATCC MYA-4618 / FGSC 9003) (Inky cap fungus) protein is Small ribosomal subunit protein eS1.